Here is a 477-residue protein sequence, read N- to C-terminus: Bile acid transporter (477 aa).

The next 15 helical transmembrane spans lie at 13-33 (FVPF…TAVL), 50-70 (WISL…GKLG), 83-103 (IVIF…IFML), 107-127 (FIVG…IVTE), 139-159 (LYML…GLIM), 166-186 (VMMW…TFSI), 206-226 (LVVV…NIGW), 228-248 (STAF…LVMV), 272-292 (LILF…IVFV), 301-321 (IISS…SVII), 333-353 (VLTF…LFKA), 359-379 (IFAA…TIFM), 381-401 (VALS…YGLF), 406-426 (APFG…ANIA), and 444-464 (ISSI…GIIL).

Belongs to the major facilitator superfamily.

The protein localises to the cell membrane. It functions in the pathway lipid metabolism; bile acid degradation. This is Bile acid transporter (baiG) from Clostridium scindens (strain JCM 10418 / VPI 12708).